A 419-amino-acid polypeptide reads, in one-letter code: ATP phosphoribosyltransferase regulatory subunit (419 aa).

Belongs to the class-II aminoacyl-tRNA synthetase family. HisZ subfamily. In terms of assembly, heteromultimer composed of HisG and HisZ subunits.

The protein resides in the cytoplasm. The protein operates within amino-acid biosynthesis; L-histidine biosynthesis; L-histidine from 5-phospho-alpha-D-ribose 1-diphosphate: step 1/9. Functionally, required for the first step of histidine biosynthesis. May allow the feedback regulation of ATP phosphoribosyltransferase activity by histidine. The polypeptide is ATP phosphoribosyltransferase regulatory subunit (Ruminiclostridium cellulolyticum (strain ATCC 35319 / DSM 5812 / JCM 6584 / H10) (Clostridium cellulolyticum)).